A 1162-amino-acid polypeptide reads, in one-letter code: Eukaryotic translation initiation factor 2-alpha kinase (1162 aa).

A signal peptide spans methionine 1–alanine 39. Over glycine 40–valine 537 the chain is Lumenal. Residues asparagine 193, asparagine 260, asparagine 353, asparagine 461, asparagine 505, and asparagine 516 are each glycosylated (N-linked (GlcNAc...) asparagine). The segment at threonine 498–histidine 517 is disordered. A compositionally biased stretch (polar residues) spans alanine 499–histidine 517. Residues isoleucine 538–isoleucine 558 form a helical membrane-spanning segment. Over leucine 559–glutamine 1162 the chain is Cytoplasmic. The residue at position 624 (serine 624) is a Phosphoserine. The Protein kinase domain maps to phenylalanine 642 to leucine 1130. Residues leucine 648–valine 656 and lysine 671 contribute to the ATP site. Serine 797 carries the post-translational modification Phosphoserine. Residues phenylalanine 801–serine 839 form a disordered region. The segment covering glutamate 813–glutamine 828 has biased composition (acidic residues). Threonine 818 is modified (phosphothreonine). The active-site Proton acceptor is the aspartate 980. The residue at position 1028 (threonine 1028) is a Phosphothreonine. The segment at glutamine 1135–glutamine 1162 is disordered. Over residues serine 1151 to glutamine 1162 the composition is skewed to low complexity.

It belongs to the protein kinase superfamily. Ser/Thr protein kinase family. GCN2 subfamily. Forms dimers with HSPA5/BIP in resting cells. Oligomerizes in ER-stressed cells. In terms of processing, autophosphorylated. Post-translationally, N-glycosylated.

The protein localises to the endoplasmic reticulum membrane. It catalyses the reaction L-seryl-[protein] + ATP = O-phospho-L-seryl-[protein] + ADP + H(+). It carries out the reaction L-threonyl-[protein] + ATP = O-phospho-L-threonyl-[protein] + ADP + H(+). Perturbation in protein folding in the endoplasmic reticulum (ER) promotes reversible dissociation from HSPA5/BIP and oligomerization, resulting in transautophosphorylation and kinase activity induction. Phosphorylates the alpha subunit of eukaryotic translation-initiation factor 2 (EIF2), leading to its inactivation and thus to a rapid reduction of translational initiation and repression of global protein synthesis. This Drosophila melanogaster (Fruit fly) protein is Eukaryotic translation initiation factor 2-alpha kinase (PEK).